We begin with the raw amino-acid sequence, 331 residues long: UPF0324 membrane protein SACOL0411 (331 aa).

The next 11 helical transmembrane spans lie at 9–26, 31–48, 69–88, 93–115, 122–144, 154–176, 183–202, 217–234, 247–269, 273–295, and 308–330; these read FMIG…SFLA, ILDK…AILY, LLRF…DIIG, LLAI…NKLL, ALLL…APIF, SIGI…YAIF, YGAW…LAGG, LGRV…ILIM, ISIP…VTIP, LNIL…GLNV, and LMTI…HWLY.

Belongs to the UPF0324 family.

The protein localises to the cell membrane. The protein is UPF0324 membrane protein SACOL0411 of Staphylococcus aureus (strain COL).